Here is a 767-residue protein sequence, read N- to C-terminus: Lysyl oxidase homolog 2 (767 aa).

Positions 1 to 19 (MLVTHIFLLTLSLSVPTLG) are cleaved as a signal peptide. SRCR domains are found at residues 51 to 152 (VRLA…VQCS), 181 to 295 (IRAI…VSCT), 319 to 418 (VRLR…VRCN), and 428 to 537 (VRLS…VSCV). 9 cysteine pairs are disulfide-bonded: Cys77/Cys141, Cys90/Cys151, Cys121/Cys131, Cys211/Cys284, Cys224/Cys294, Cys258/Cys268, Cys344/Cys407, Cys357/Cys417, and Cys388/Cys398. An N-linked (GlcNAc...) asparagine glycan is attached at Asn281. An N-linked (GlcNAc...) asparagine glycan is attached at Asn448. 3 cysteine pairs are disulfide-bonded: Cys457/Cys523, Cys470/Cys536, and Cys504/Cys514. The lysyl-oxidase like stretch occupies residues 541–744 (PDLVLNAALV…WMYNCHIGGS (204 aa)). Positions 542 and 543 each coordinate Ca(2+). Cystine bridges form between Cys566–Cys618, Cys572–Cys688, Cys650–Cys666, and Cys656–Cys678. Positions 619, 621, and 623 each coordinate Cu cation. Residue Asn637 is glycosylated (N-linked (GlcNAc...) asparagine). A cross-link (lysine tyrosylquinone (Lys-Tyr)) is located at residues 646 to 682 (KASFCLEDSECETDVQKQYACANFGEQGITVGCWDVY). A 2',4',5'-topaquinone modification is found at Tyr682. Glu715, Asp717, Asn720, and Asn721 together coordinate Ca(2+). Residues Cys725 and Cys739 are joined by a disulfide bond.

This sequence belongs to the lysyl oxidase family. Cu cation is required as a cofactor. Requires lysine tyrosylquinone residue as cofactor. The lysine tyrosylquinone cross-link (LTQ) is generated by condensation of the epsilon-amino group of a lysine with a topaquinone produced by oxidation of tyrosine.

It is found in the secreted. Its subcellular location is the extracellular space. It localises to the extracellular matrix. The protein localises to the basement membrane. The protein resides in the nucleus. It is found in the chromosome. Its subcellular location is the endoplasmic reticulum. It carries out the reaction L-lysyl-[protein] + O2 + H2O = (S)-2-amino-6-oxohexanoyl-[protein] + H2O2 + NH4(+). Its function is as follows. Mediates the post-translational oxidative deamination of lysine residues on target proteins leading to the formation of deaminated lysine (allysine). Acts as a transcription corepressor and specifically mediates deamination of trimethylated 'Lys-4' of histone H3 (H3K4me3), a specific tag for epigenetic transcriptional activation. Shows no activity against histone H3 when it is trimethylated on 'Lys-9' (H3K9me3) or 'Lys-27' (H3K27me3) or when 'Lys-4' is monomethylated (H3K4me1) or dimethylated (H3K4me2). Also mediates deamination of methylated TAF10, a member of the transcription factor IID (TFIID) complex, which induces release of TAF10 from promoters, leading to inhibition of TFIID-dependent transcription. LOXL2-mediated deamination of TAF10 results in transcriptional repression of genes required for embryonic stem cell pluripotency. Involved in epithelial to mesenchymal transition (EMT) and participates in repression of E-cadherin, probably by mediating deamination of histone H3. When secreted into the extracellular matrix, promotes cross-linking of extracellular matrix proteins by mediating oxidative deamination of peptidyl lysine residues in precursors to fibrous collagen and elastin. Acts as a regulator of sprouting angiogenesis, probably via collagen IV scaffolding. Acts as a regulator of chondrocyte differentiation, probably by regulating expression of factors that control chondrocyte differentiation. This Xenopus tropicalis (Western clawed frog) protein is Lysyl oxidase homolog 2 (loxl2).